The sequence spans 353 residues: 3'(2'),5'-bisphosphate nucleotidase 1 (353 aa).

D46 functions as the Proton acceptor in the catalytic mechanism. Residues E71, D134, I136, and D137 each coordinate Mg(2+). T139 functions as the Proton acceptor in the catalytic mechanism. Adenosine 3',5'-bisphosphate contacts are provided by T139, H235, S259, K262, R276, and D288. Positions 235, 259, 262, 276, and 288 each coordinate AMP. Residue D288 coordinates Mg(2+).

The protein belongs to the inositol monophosphatase superfamily. Mg(2+) is required as a cofactor. Expressed in roots, leaves, stems, flowers and siliques.

The catalysed reaction is 3'-phosphoadenylyl sulfate + H2O = adenosine 5'-phosphosulfate + phosphate. The enzyme catalyses adenosine 3',5'-bisphosphate + H2O = AMP + phosphate. It carries out the reaction adenosine 2',5'-bisphosphate + H2O = AMP + phosphate. It catalyses the reaction 1D-myo-inositol 1,4-bisphosphate + H2O = 1D-myo-inositol 4-phosphate + phosphate. The catalysed reaction is 1D-myo-inositol 1,3,4-trisphosphate + H2O = 1D-myo-inositol 3,4-bisphosphate + phosphate. The protein operates within signal transduction; phosphatidylinositol signaling pathway. Inhibited non-competitively by Li(+) (IC(50)=0.20 mM) and Na(+) (IC(50)=200 mM). In terms of biological role, phosphatase that converts adenosine 3'-phosphate 5'-phosphosulfate (PAPS) to adenosine 5'-phosphosulfate (APS) and 3'(2')-phosphoadenosine 5'-phosphate (PAP) to AMP. May regulate the flux of sulfur in the sulfur-activation pathway by converting PAPS to APS. May play a role in the biosynthesis of sulfate conjugates and RNA processing. Is also able to hydrolyze inositol 1,4-bisphosphate and inositol 1,3,4-trisphosphate. Could be considered as a negative regulator of abscisic acid (ABA)- and stress-responsive genes, through modulating the inositol 1,4,5-trisphosphate (IP3) turnover. Is also involved in salt tolerance. Acts as a suppressor of virus- and transgene-induced silencing. This is 3'(2'),5'-bisphosphate nucleotidase 1 from Arabidopsis thaliana (Mouse-ear cress).